Here is a 260-residue protein sequence, read N- to C-terminus: Acyl-[acyl-carrier-protein]--UDP-N-acetylglucosamine O-acyltransferase (260 aa).

The protein belongs to the transferase hexapeptide repeat family. LpxA subfamily. As to quaternary structure, homotrimer.

Its subcellular location is the cytoplasm. The enzyme catalyses a (3R)-hydroxyacyl-[ACP] + UDP-N-acetyl-alpha-D-glucosamine = a UDP-3-O-[(3R)-3-hydroxyacyl]-N-acetyl-alpha-D-glucosamine + holo-[ACP]. Its pathway is glycolipid biosynthesis; lipid IV(A) biosynthesis; lipid IV(A) from (3R)-3-hydroxytetradecanoyl-[acyl-carrier-protein] and UDP-N-acetyl-alpha-D-glucosamine: step 1/6. In terms of biological role, involved in the biosynthesis of lipid A, a phosphorylated glycolipid that anchors the lipopolysaccharide to the outer membrane of the cell. The chain is Acyl-[acyl-carrier-protein]--UDP-N-acetylglucosamine O-acyltransferase from Sulfurovum sp. (strain NBC37-1).